The chain runs to 292 residues: MSIISTKYLLQDAQAKGYAVPAFNIHNAETIQAILEVCSEMRSPVILAGTPGTFKHIALEEIYALCSAYSISYDMPLALHLDHHESLDDIRRKVNAGVRSAMIDGSHFPFEQNVTLVKSVVDFCHLNDCSVEAELGRLGGMEDDMSVDAESAFLTDPQEAKRFVELTGVDSLAVAIGTAHGLYTKRPKIDFQRLAEIRDVVDIPLVLHGASDVPDEFVRRTIELGVCKVNVATELKIAFSAAVKEWFNENPQGNDPRFYMRVGMDAMKEVVKNKINVCGSANKLVLDSAVVL.

D82 (proton donor) is an active-site residue. Zn(2+)-binding residues include H83 and H180. G181 contributes to the dihydroxyacetone phosphate binding site. H208 contributes to the Zn(2+) binding site. Residues 209–211 (GAS) and 230–233 (NVAT) contribute to the dihydroxyacetone phosphate site.

Belongs to the class II fructose-bisphosphate aldolase family. TagBP aldolase KbaY subfamily. As to quaternary structure, homotetramer. Forms a complex with KbaZ. Zn(2+) is required as a cofactor.

It carries out the reaction D-tagatofuranose 1,6-bisphosphate = D-glyceraldehyde 3-phosphate + dihydroxyacetone phosphate. Its pathway is carbohydrate metabolism; D-tagatose 6-phosphate degradation; D-glyceraldehyde 3-phosphate and glycerone phosphate from D-tagatose 6-phosphate: step 2/2. Functionally, catalytic subunit of the tagatose-1,6-bisphosphate aldolase KbaYZ, which catalyzes the reversible aldol condensation of dihydroxyacetone phosphate (DHAP or glycerone-phosphate) with glyceraldehyde 3-phosphate (G3P) to produce tagatose 1,6-bisphosphate (TBP). Requires KbaZ subunit for full activity and stability. The protein is D-tagatose-1,6-bisphosphate aldolase subunit KbaY of Enterobacter sp. (strain 638).